The following is a 270-amino-acid chain: Thiazole synthase (270 aa).

Lys-112 (schiff-base intermediate with DXP) is an active-site residue. 1-deoxy-D-xylulose 5-phosphate-binding positions include Gly-173, 199–200 (AG), and 221–222 (NS).

It belongs to the ThiG family. As to quaternary structure, homotetramer. Forms heterodimers with either ThiH or ThiS.

The protein localises to the cytoplasm. The enzyme catalyses [ThiS sulfur-carrier protein]-C-terminal-Gly-aminoethanethioate + 2-iminoacetate + 1-deoxy-D-xylulose 5-phosphate = [ThiS sulfur-carrier protein]-C-terminal Gly-Gly + 2-[(2R,5Z)-2-carboxy-4-methylthiazol-5(2H)-ylidene]ethyl phosphate + 2 H2O + H(+). The protein operates within cofactor biosynthesis; thiamine diphosphate biosynthesis. Catalyzes the rearrangement of 1-deoxy-D-xylulose 5-phosphate (DXP) to produce the thiazole phosphate moiety of thiamine. Sulfur is provided by the thiocarboxylate moiety of the carrier protein ThiS. In vitro, sulfur can be provided by H(2)S. This is Thiazole synthase from Pseudomonas putida (strain ATCC 700007 / DSM 6899 / JCM 31910 / BCRC 17059 / LMG 24140 / F1).